Consider the following 269-residue polypeptide: Eukaryotic translation initiation factor 3 subunit G-2 (269 aa).

The 79-residue stretch at 189–267 (SAVRISNLSE…LILCVEWSKP (79 aa)) folds into the RRM domain.

This sequence belongs to the eIF-3 subunit G family. In terms of assembly, component of the eukaryotic translation initiation factor 3 (eIF-3) complex. The eIF-3 complex interacts with pix.

The protein localises to the cytoplasm. In terms of biological role, RNA-binding component of the eukaryotic translation initiation factor 3 (eIF-3) complex, which is involved in protein synthesis of a specialized repertoire of mRNAs and, together with other initiation factors, stimulates binding of mRNA and methionyl-tRNAi to the 40S ribosome. The eIF-3 complex specifically targets and initiates translation of a subset of mRNAs involved in cell proliferation. This subunit can bind 18S rRNA. This Drosophila ananassae (Fruit fly) protein is Eukaryotic translation initiation factor 3 subunit G-2.